A 201-amino-acid chain; its full sequence is Retinol-binding protein 4 (201 aa).

A signal peptide spans M1–A18. 3 disulfide bridges follow: C22/C178, C88/C192, and C138/C147. Residue Q116 coordinates substrate. R139 carries the omega-N-methylarginine modification.

The protein belongs to the calycin superfamily. Lipocalin family. Interacts with TTR. Interaction with TTR prevents its loss by filtration through the kidney glomeruli. Interacts with STRA6. In terms of tissue distribution, detected in blood plasma and in urine (at protein level).

It is found in the secreted. Functionally, retinol-binding protein that mediates retinol transport in blood plasma. Delivers retinol from the liver stores to the peripheral tissues. Transfers the bound all-trans retinol to STRA6, that then facilitates retinol transport across the cell membrane. This chain is Retinol-binding protein 4 (RBP4), found in Homo sapiens (Human).